A 609-amino-acid polypeptide reads, in one-letter code: UvrABC system protein C (609 aa).

Positions 15–93 constitute a GIY-YIG domain; that stretch reads SSAGVYRMYD…IKQYMPKYNV (79 aa). Positions 202 to 237 constitute a UVR domain; the sequence is QQVVTNLVTKMEQAAEEFHYEQAAAYRDQITALRKV.

The protein belongs to the UvrC family. In terms of assembly, interacts with UvrB in an incision complex.

Its subcellular location is the cytoplasm. In terms of biological role, the UvrABC repair system catalyzes the recognition and processing of DNA lesions. UvrC both incises the 5' and 3' sides of the lesion. The N-terminal half is responsible for the 3' incision and the C-terminal half is responsible for the 5' incision. The polypeptide is UvrABC system protein C (Shewanella denitrificans (strain OS217 / ATCC BAA-1090 / DSM 15013)).